A 339-amino-acid chain; its full sequence is Cilia- and flagella-associated protein 36 (339 aa).

Coiled-coil stretches lie at residues 142-188 and 255-330; these read ISDL…ENKQ and NLSQ…EVIL. Disordered regions lie at residues 177-212 and 281-318; these read NLTL…EKQP and KKQE…QRRK. Over residues 187 to 200 the composition is skewed to polar residues; that stretch reads KQSSGSERTPNNTE. Residues 281–313 show a composition bias toward basic and acidic residues; sequence KKQESKKMAQNSEEHEEKATCSKQEMTEEEKKS.

Belongs to the CFAP36 family.

It is found in the nucleus. It localises to the cytoplasm. Its subcellular location is the cell projection. The protein localises to the cilium. The protein resides in the flagellum. This Xenopus tropicalis (Western clawed frog) protein is Cilia- and flagella-associated protein 36.